The sequence spans 211 residues: Porin MspA (211 aa).

The signal sequence occupies residues 1–27; sequence MKAISRVLIAMVAAIAALFTSTGTSHA.

This sequence belongs to the mycobacterial porin (TC 1.B.24) family. As to quaternary structure, forms very stable octamers. Isolated as a 100 kDa complex that can be reduced to monomers upon boiling in 80% dimethyl sulfoxide for 15 minutes. Structures show a goblet with the wide end on the exterior of the outer membrane and a central channel. It is not known if mixed oligomers of MspA with other Msp subunits form in vivo.

It localises to the cell outer membrane. It is found in the secreted. Its subcellular location is the cell wall. In terms of biological role, the major porin in this organism, forms a water-filled channel which favors the permeation of cations, amino acids, iron Fe(3+) and less efficiently phosphate. Does not transport Fe-ExoMS, the predominant siderophore. Plays a role in transport of beta-lactamase and hydrophilic fluoroquinolone antibiotics such as norfloxacin as well as chloramphenicol. There are about 2400 porins in wild-type, 800 in an mspA deletion and 150 in a double mspA-mspC deletion. Different conductance values with maxima at 2.3 and 4.6 nanosiemens might be caused by a simultaneous reconstitution of MspA channels into the membrane or by the existence of different MspA conformations. The sequence is that of Porin MspA (mspA) from Mycolicibacterium smegmatis (strain ATCC 700084 / mc(2)155) (Mycobacterium smegmatis).